The sequence spans 175 residues: ATP synthase subunit delta (175 aa).

The protein belongs to the ATPase delta chain family. F-type ATPases have 2 components, F(1) - the catalytic core - and F(0) - the membrane proton channel. F(1) has five subunits: alpha(3), beta(3), gamma(1), delta(1), epsilon(1). F(0) has three main subunits: a(1), b(2) and c(10-14). The alpha and beta chains form an alternating ring which encloses part of the gamma chain. F(1) is attached to F(0) by a central stalk formed by the gamma and epsilon chains, while a peripheral stalk is formed by the delta and b chains.

It is found in the cell inner membrane. F(1)F(0) ATP synthase produces ATP from ADP in the presence of a proton or sodium gradient. F-type ATPases consist of two structural domains, F(1) containing the extramembraneous catalytic core and F(0) containing the membrane proton channel, linked together by a central stalk and a peripheral stalk. During catalysis, ATP synthesis in the catalytic domain of F(1) is coupled via a rotary mechanism of the central stalk subunits to proton translocation. In terms of biological role, this protein is part of the stalk that links CF(0) to CF(1). It either transmits conformational changes from CF(0) to CF(1) or is implicated in proton conduction. This Xanthomonas oryzae pv. oryzae (strain MAFF 311018) protein is ATP synthase subunit delta.